The sequence spans 1387 residues: Kinesin-like protein KIF15 (1387 aa).

A disordered region spans residues 1–23 (MAPGCKSELRNVTNSHSNQPSNE). A compositionally biased stretch (polar residues) spans 10-22 (RNVTNSHSNQPSN). The Kinesin motor domain maps to 26-363 (AIKVFVRIRP…LNFAQRAKLI (338 aa)). 109–116 (GQTGSGKT) lines the ATP pocket. Residues 368-1132 (VVNEDTQGNV…LKMRQLEHVM (765 aa)) are a coiled coil. S568 is subject to Phosphoserine. K1009 is subject to N6-acetyllysine. A phosphoserine mark is found at S1141 and S1169.

It belongs to the TRAFAC class myosin-kinesin ATPase superfamily. Kinesin family. KLP2 subfamily. Interacts with MKI67 and TPX2. In terms of tissue distribution, expressed in brain (neurons in the external germinal layer of the cerebellum and in ventricular zones) (at protein level). Expressed in spleen and testis.

Its subcellular location is the cytoplasm. It is found in the cytoskeleton. It localises to the spindle. In terms of biological role, plus-end directed kinesin-like motor enzyme involved in mitotic spindle assembly. In Mus musculus (Mouse), this protein is Kinesin-like protein KIF15 (Kif15).